A 265-amino-acid chain; its full sequence is Large ribosomal subunit protein eL8 (265 aa).

This sequence belongs to the eukaryotic ribosomal protein eL8 family. In terms of assembly, interacts with cmd-1 in the presence of Ca(2+).

In Caenorhabditis elegans, this protein is Large ribosomal subunit protein eL8.